A 266-amino-acid polypeptide reads, in one-letter code: Carboxy-S-adenosyl-L-methionine synthase (266 aa).

The segment at 1-24 (MPKRETQSLHDTQQQPGPTAPQRD) is disordered. Residues Tyr-58, 83 to 85 (GCS), 108 to 109 (DN), 136 to 137 (DI), Asn-151, and Arg-218 contribute to the S-adenosyl-L-methionine site.

The protein belongs to the class I-like SAM-binding methyltransferase superfamily. Cx-SAM synthase family. As to quaternary structure, homodimer.

The enzyme catalyses prephenate + S-adenosyl-L-methionine = carboxy-S-adenosyl-L-methionine + 3-phenylpyruvate + H2O. Its function is as follows. Catalyzes the conversion of S-adenosyl-L-methionine (SAM) to carboxy-S-adenosyl-L-methionine (Cx-SAM). In Yersinia enterocolitica serotype O:8 / biotype 1B (strain NCTC 13174 / 8081), this protein is Carboxy-S-adenosyl-L-methionine synthase.